Reading from the N-terminus, the 414-residue chain is TBC domain-containing protein C1778.09 (414 aa).

The 186-residue stretch at 158–343 folds into the Rab-GAP TBC domain; sequence GIPDCWRSIA…RIWDLLFLLG (186 aa).

The protein localises to the cytoplasm. It is found in the nucleus. The chain is TBC domain-containing protein C1778.09 from Schizosaccharomyces pombe (strain 972 / ATCC 24843) (Fission yeast).